The following is a 296-amino-acid chain: ATP synthase gamma chain (296 aa).

Residues 194–216 form a disordered region; sequence IPASAGQAANDNAGSDQPAGDYE.

Belongs to the ATPase gamma chain family. In terms of assembly, F-type ATPases have 2 components, CF(1) - the catalytic core - and CF(0) - the membrane proton channel. CF(1) has five subunits: alpha(3), beta(3), gamma(1), delta(1), epsilon(1). CF(0) has three main subunits: a, b and c.

Its subcellular location is the cell inner membrane. Functionally, produces ATP from ADP in the presence of a proton gradient across the membrane. The gamma chain is believed to be important in regulating ATPase activity and the flow of protons through the CF(0) complex. The chain is ATP synthase gamma chain from Acidiphilium cryptum (strain JF-5).